A 492-amino-acid polypeptide reads, in one-letter code: Transmembrane protease serine 2 (492 aa).

Topologically, residues 1 to 84 (MALNSGSPPA…TVCTSKTKKA (84 aa)) are cytoplasmic. A helical; Signal-anchor for type II membrane protein membrane pass occupies residues 85–105 (LCITLTLGTFLVGAALAAGLL). The Extracellular segment spans residues 106–492 (WKFMGSKCSN…WIYRQMRADG (387 aa)). Intrachain disulfides connect C113-C126, C120-C139, C133-C148, C172-C231, C185-C241, C244-C365, C281-C297, C410-C426, and C437-C465. The LDL-receptor class A domain maps to 118–148 (IECDSSGTCINPSNWCDGVSHCPGGEDENRC). The Ca(2+) site is built by N131, D134, V136, D144, and E145. The region spanning 149–242 (VRLYGPNFIL…SKAVVSLRCI (94 aa)) is the SRCR domain. N-linked (GlcNAc...) asparagine glycosylation is found at N213 and N249. The Peptidase S1 domain occupies 256 to 492 (IVGGESALPG…WIYRQMRADG (237 aa)). Residues H296 and D345 each act as charge relay system in the active site. The tract at residues 340-470 (KTKNNDIALM…WGSGCAKAYR (131 aa)) is HKU1-CoV S protein-binding. The active-site Charge relay system is S441.

It belongs to the peptidase S1 family. The catalytically active form interacts with ACE2. In terms of processing, proteolytically processed; by an autocatalytic mechanism. Autocleavage induces active conformation. As to expression, expressed in several tissues that comprise large populations of epithelial cells with the highest level of transcripts measured in the prostate gland. Expressed in type II pneumocytes in the lung (at protein level). Expressed strongly in small intestine. Also expressed in colon, stomach and salivary gland. Coexpressed with ACE2 within lung type II pneumocytes, ileal absorptive enterocytes, intestinal epithelial cells, cornea, gallbladder and nasal goblet secretory cells.

The protein localises to the cell membrane. Its subcellular location is the secreted. It catalyses the reaction The enzyme cleaves angiotensin-converting enzyme 2 (EC 3.4.17.23) and cleaves influenzea A and B virus and coronavirus spike glycoproteins at arginine residues.. In terms of biological role, plasma membrane-anchored serine protease that cleaves at arginine residues. Participates in proteolytic cascades of relevance for the normal physiologic function of the prostate. Androgen-induced TMPRSS2 activates several substrates that include pro-hepatocyte growth factor/HGF, the protease activated receptor-2/F2RL1 or matriptase/ST14 leading to extracellular matrix disruption and metastasis of prostate cancer cells. In addition, activates trigeminal neurons and contribute to both spontaneous pain and mechanical allodynia. (Microbial infection) Facilitates human coronaviruses SARS-CoV and SARS-CoV-2 infections via two independent mechanisms, proteolytic cleavage of ACE2 receptor which promotes viral uptake, and cleavage of coronavirus spike glycoproteins which activates the glycoprotein for host cell entry. The cleavage of SARS-COV2 spike glycoprotein occurs between the S2 and S2' site. Upon SARS-CoV-2 infection, increases syncytia formation by accelerating the fusion process. Proteolytically cleaves and activates the spike glycoproteins of human coronavirus 229E (HCoV-229E) and human coronavirus EMC (HCoV-EMC) and the fusion glycoproteins F0 of Sendai virus (SeV), human metapneumovirus (HMPV), human parainfluenza 1, 2, 3, 4a and 4b viruses (HPIV). Essential for spread and pathogenesis of influenza A virus (strains H1N1, H3N2 and H7N9); involved in proteolytic cleavage and activation of hemagglutinin (HA) protein which is essential for viral infectivity. Its function is as follows. (Microbial infection) Receptor for human coronavirus HKU1-CoV, acts synergistically with disialoside glycans to facilitate the entry of the virus. After binding to cell-surface disialoside glycans, the viral S protein interacts with the inactive form of TMPRSS2 and inhibits its protease activity. The sequence is that of Transmembrane protease serine 2 from Homo sapiens (Human).